The primary structure comprises 751 residues: Proton-associated sugar transporter A (751 aa).

6 consecutive transmembrane segments (helical) span residues 93–113, 123–143, 155–175, 191–211, 233–253, and 268–288; these read ILFG…PVLL, SLVW…LGAW, RPFI…LLNG, WGIL…DSAD, IHAL…GIHW, and VIYI…LVSI. At Thr-500 the chain carries Phosphothreonine. A run of 6 helical transmembrane segments spans residues 536–556, 576–596, 606–626, 630–650, 688–708, and 710–730; these read GWLS…EVVF, VTMG…YSAI, VRTL…LATL, LYVV…LCTL, FLAQ…VGSA, and GVMY…SLCV.

This sequence belongs to the glycoside-pentoside-hexuronide (GPH) cation symporter transporter (TC 2.A.2) family. In terms of tissue distribution, predominantly expressed in brain.

The protein resides in the membrane. The enzyme catalyses D-galactose(in) + H(+)(in) = D-galactose(out) + H(+)(out). It carries out the reaction D-glucose(out) + H(+)(out) = D-glucose(in) + H(+)(in). Its function is as follows. Proton-associated glucose transporter in the brain. This chain is Proton-associated sugar transporter A, found in Rattus norvegicus (Rat).